The chain runs to 195 residues: Imidazoleglycerol-phosphate dehydratase (195 aa).

It belongs to the imidazoleglycerol-phosphate dehydratase family.

It is found in the cytoplasm. It catalyses the reaction D-erythro-1-(imidazol-4-yl)glycerol 3-phosphate = 3-(imidazol-4-yl)-2-oxopropyl phosphate + H2O. The protein operates within amino-acid biosynthesis; L-histidine biosynthesis; L-histidine from 5-phospho-alpha-D-ribose 1-diphosphate: step 6/9. This chain is Imidazoleglycerol-phosphate dehydratase, found in Methanosphaerula palustris (strain ATCC BAA-1556 / DSM 19958 / E1-9c).